The following is a 325-amino-acid chain: Olfactory receptor 14L1 (325 aa).

Topologically, residues 1-43 (MAQFNKNQLIACRRNGTTTSDFNQTEVAEFFLMGFSNSWDIQI) are extracellular. The chain crosses the membrane as a helical span at residues 44–64 (VHAALFFLVYLAAVIGNLLII). The Cytoplasmic segment spans residues 65–72 (ILTTLDVH). Residues 73 to 93 (LQTPMYFFLRNLSFLDFCYIS) traverse the membrane as a helical segment. Topologically, residues 94 to 117 (VTIPKSIVSSLTHDTSISFFGCAL) are extracellular. Residues 118–138 (QAFFFMDLATTEVAILTVMSY) form a helical membrane-spanning segment. Residues 139-151 (DRYMAICRPLHYE) are Cytoplasmic-facing. A helical membrane pass occupies residues 152–172 (VIINQGVCLRMMAMSWLSGVI). At 173–214 (CGFMHVIATFSLPFCGRNRIRQFFCNIPQLLSLLDPKVITIE) the chain is on the extracellular side. A helical transmembrane segment spans residues 215–235 (IGVMVFGTSLVIISFVVITLS). Topologically, residues 236-255 (YMYIFSVIMRIPSKEGRSKT) are cytoplasmic. A helical membrane pass occupies residues 256–276 (FSTCIPHLVVVTLFMISGSIA). At 277–289 (YVKPISNSPPVLD) the chain is on the extracellular side. A helical membrane pass occupies residues 290 to 310 (VFLSAFYTVVPPTLNPVIYSL). Topologically, residues 311 to 325 (RNRDMKAALRRQCGP) are cytoplasmic.

It belongs to the G-protein coupled receptor 1 family.

The protein localises to the cell membrane. Its function is as follows. Odorant receptor. This Homo sapiens (Human) protein is Olfactory receptor 14L1.